Reading from the N-terminus, the 428-residue chain is Immunoglobulin superfamily containing leucine-rich repeat protein (428 aa).

An N-terminal signal peptide occupies residues 1 to 18 (MQELHLLWWALLLGLAQA). In terms of domain architecture, LRRNT spans 19 to 50 (CPEPCDCGEKYGFQIADCAYRDLESVPPGFPA). An N-linked (GlcNAc...) asparagine glycan is attached at Asn51. LRR repeat units follow at residues 51 to 72 (NVTTLSLSANRLPGLPEGAFRE), 75 to 96 (LLQSLWLAHNEIRTVAAGALAS), 99 to 122 (HLKSLDLSHNLISDFAWSDLHNLS), 123 to 144 (ALQLLKMDSNELTFIPRDAFRS), and 147 to 168 (ALRSLQLNHNRLHTLAEGTFTP). The LRRCT domain maps to 180-231 (NPFDCTCGIVWLKTWALTTAVSIPEQDNIACTSPHVLKGTPLSRLPPLPCSA). In terms of domain architecture, Ig-like spans 232–343 (PSVQLSYQPS…GSAESSVDVA (112 aa)). Cys257 and Cys327 are oxidised to a cystine. N-linked (GlcNAc...) asparagine glycosylation occurs at Asn309.

In terms of tissue distribution, expressed in various tissues including retina, heart, skeletal muscle, prostate, ovary, small intestine, thyroid, adrenal cortex, testis, stomach and spinal cord.

The protein resides in the secreted. In Homo sapiens (Human), this protein is Immunoglobulin superfamily containing leucine-rich repeat protein (ISLR).